The following is a 96-amino-acid chain: Aspartyl/glutamyl-tRNA(Asn/Gln) amidotransferase subunit C (96 aa).

This sequence belongs to the GatC family. Heterotrimer of A, B and C subunits.

The enzyme catalyses L-glutamyl-tRNA(Gln) + L-glutamine + ATP + H2O = L-glutaminyl-tRNA(Gln) + L-glutamate + ADP + phosphate + H(+). It catalyses the reaction L-aspartyl-tRNA(Asn) + L-glutamine + ATP + H2O = L-asparaginyl-tRNA(Asn) + L-glutamate + ADP + phosphate + 2 H(+). Functionally, allows the formation of correctly charged Asn-tRNA(Asn) or Gln-tRNA(Gln) through the transamidation of misacylated Asp-tRNA(Asn) or Glu-tRNA(Gln) in organisms which lack either or both of asparaginyl-tRNA or glutaminyl-tRNA synthetases. The reaction takes place in the presence of glutamine and ATP through an activated phospho-Asp-tRNA(Asn) or phospho-Glu-tRNA(Gln). This Neisseria gonorrhoeae (strain ATCC 700825 / FA 1090) protein is Aspartyl/glutamyl-tRNA(Asn/Gln) amidotransferase subunit C.